Here is a 448-residue protein sequence, read N- to C-terminus: Tubulin beta-1 chain (448 aa).

Residues Gln-11, Glu-69, Ser-138, Gly-142, Thr-143, Gly-144, Asn-204, and Asn-226 each contribute to the GTP site. Glu-69 serves as a coordination point for Mg(2+). The tract at residues 427 to 448 (DATADEEGDLQEGESEYIEQEE) is disordered. The segment covering 429 to 448 (TADEEGDLQEGESEYIEQEE) has biased composition (acidic residues).

It belongs to the tubulin family. Dimer of alpha and beta chains. A typical microtubule is a hollow water-filled tube with an outer diameter of 25 nm and an inner diameter of 15 nM. Alpha-beta heterodimers associate head-to-tail to form protofilaments running lengthwise along the microtubule wall with the beta-tubulin subunit facing the microtubule plus end conferring a structural polarity. Microtubules usually have 13 protofilaments but different protofilament numbers can be found in some organisms and specialized cells. It depends on Mg(2+) as a cofactor.

It localises to the cytoplasm. The protein localises to the cytoskeleton. Its function is as follows. Tubulin is the major constituent of microtubules, a cylinder consisting of laterally associated linear protofilaments composed of alpha- and beta-tubulin heterodimers. Microtubules grow by the addition of GTP-tubulin dimers to the microtubule end, where a stabilizing cap forms. Below the cap, tubulin dimers are in GDP-bound state, owing to GTPase activity of alpha-tubulin. The protein is Tubulin beta-1 chain of Brugia pahangi (Filarial nematode worm).